The chain runs to 187 residues: Virulence protein ATR13 (187 aa).

Residues 1–19 (MRLVHAVLLPGIIVFVSNG) form the signal peptide. Positions 38-41 (RQLR) match the RxLR motif. The segment at 50–92 (LSRASFGLGKAQDPLDKFFRKIINSRKPIETSYSAKGIHEKII) is leucine heptad repeat region. A run of 4 repeats spans residues 93–103 (KAYDRHVFESK), 104–114 (KAHDRHVSKSK), 115–125 (KAHGRHVSKSK), and 126–136 (MAHDRHVSKSE). The 4 X 11 AA tandem repeats stretch occupies residues 93 to 136 (KAYDRHVFESKKAHDRHVSKSKKAHGRHVSKSKMAHDRHVSKSE). A disordered region spans residues 104-136 (KAHDRHVSKSKKAHGRHVSKSKMAHDRHVSKSE). Over residues 111–125 (SKSKKAHGRHVSKSK) the composition is skewed to basic residues. Over residues 126-136 (MAHDRHVSKSE) the composition is skewed to basic and acidic residues. Residues 137–187 (KAPIQYASVADYLKKIYPGTDIERIVSTLKRHDEVGAKDLGAKLQTAVASQ) form a highly variable C-terminus domain region.

It belongs to the RxLR effector family.

The protein localises to the secreted. Its subcellular location is the host nucleus. The protein resides in the host nucleolus. It localises to the host cytoplasm. In terms of biological role, secreted effector that acts as an elicitor of hypersensitive response (HR) specifically on plants carrying defense protein RPP13. Recognition of ATR13 by RPP13 initiates defense responses that are effective against oomycete, bacterial and viral pathogens. Due to high polymorphism, ATR13-Emoy2 does not recognize RPP13-Nd, the RPP13 defense protein from Arabidopsis thaliana ecotype Niederzenz. ATR13-Emoy2 is recognized by RPP13 variants RPP13-UKID44, RPP13-UKID65 and RPP13-UKID71. This Hyaloperonospora arabidopsidis (strain Emoy2) (Downy mildew agent) protein is Virulence protein ATR13.